The sequence spans 597 residues: Elongation factor 4 (597 aa).

The region spanning 2-184 is the tr-type G domain; the sequence is KHIRNFSIIA…NIVSAIPAPE (183 aa). GTP is bound by residues 14–19 and 131–134; these read DHGKST and NKID.

The protein belongs to the TRAFAC class translation factor GTPase superfamily. Classic translation factor GTPase family. LepA subfamily.

Its subcellular location is the cell inner membrane. The enzyme catalyses GTP + H2O = GDP + phosphate + H(+). In terms of biological role, required for accurate and efficient protein synthesis under certain stress conditions. May act as a fidelity factor of the translation reaction, by catalyzing a one-codon backward translocation of tRNAs on improperly translocated ribosomes. Back-translocation proceeds from a post-translocation (POST) complex to a pre-translocation (PRE) complex, thus giving elongation factor G a second chance to translocate the tRNAs correctly. Binds to ribosomes in a GTP-dependent manner. This chain is Elongation factor 4, found in Vibrio parahaemolyticus serotype O3:K6 (strain RIMD 2210633).